A 443-amino-acid chain; its full sequence is ATP-dependent protease ATPase subunit HslU (443 aa).

ATP-binding positions include Ile18, 60–65, Asp256, Glu321, and Arg393; that span reads GVGKTE.

This sequence belongs to the ClpX chaperone family. HslU subfamily. In terms of assembly, a double ring-shaped homohexamer of HslV is capped on each side by a ring-shaped HslU homohexamer. The assembly of the HslU/HslV complex is dependent on binding of ATP.

It is found in the cytoplasm. In terms of biological role, ATPase subunit of a proteasome-like degradation complex; this subunit has chaperone activity. The binding of ATP and its subsequent hydrolysis by HslU are essential for unfolding of protein substrates subsequently hydrolyzed by HslV. HslU recognizes the N-terminal part of its protein substrates and unfolds these before they are guided to HslV for hydrolysis. The sequence is that of ATP-dependent protease ATPase subunit HslU from Escherichia coli O157:H7 (strain EC4115 / EHEC).